We begin with the raw amino-acid sequence, 1779 residues long: Fibronectin type III domain-containing protein 1 (1779 aa).

Positions Met1–Ser29 are cleaved as a signal peptide. 4 Fibronectin type-III domains span residues Pro33 to Arg126, Pro103 to Asp203, Val207 to Ser302, and Ala307 to Thr402. Over residues Pro400–Gly413 the composition is skewed to polar residues. 4 disordered regions span residues Pro400–Ala442, Asn459–Asp1108, Glu1120–Gly1227, and Pro1330–Thr1401. A compositionally biased stretch (low complexity) spans Gln423–Gln437. The span at Asn493–Gln506 shows a compositional bias: polar residues. A compositionally biased stretch (basic and acidic residues) spans Ser534–Val554. Polar residues-rich tracts occupy residues Ser557–Asn570 and Ser590–Pro607. Residues Ala629–Ser640 are compositionally biased toward low complexity. Ser651 is subject to Phosphoserine. Residues His676–Ala694 are compositionally biased toward low complexity. The residue at position 699 (Ser699) is a Phosphoserine. Positions Asp707 to Glu720 are enriched in basic and acidic residues. Polar residues-rich tracts occupy residues Pro763–Ala784 and Pro861–Asp875. Low complexity predominate over residues Pro879 to Pro904. Composition is skewed to polar residues over residues Ala957–Asp971 and Val1003–Gly1020. Over residues Leu1085–Ser1097 the composition is skewed to low complexity. Over residues Pro1098–Asp1108 the composition is skewed to basic and acidic residues. Polar residues-rich tracts occupy residues Asn1147 to Ser1159 and Arg1166 to Met1177. Residues Pro1330 to Glu1389 are compositionally biased toward low complexity. Positions Ala1543–Asp1637 constitute a Fibronectin type-III 5 domain. A glycan (N-linked (GlcNAc...) asparagine) is linked at Asn1546.

It localises to the secreted. Functionally, may be an activator of G protein signaling. This is Fibronectin type III domain-containing protein 1 (Fndc1) from Rattus norvegicus (Rat).